The following is a 309-amino-acid chain: Gamma-hemolysin component A (309 aa).

An N-terminal signal peptide occupies residues 1 to 29; that stretch reads MIKNKILTATLAVGLIAPLANPFIEISKA.

The protein belongs to the aerolysin family. Toxicity requires sequential binding and synergistic association of a class S and a class F component which form heterooligomeric complexes. HlgA (class S) associates with HlgB (class F) thus forming an AB toxin in strains producing both gamma-hemolysins and leukocidins. HlgA and LukF-PV can also form a complex.

The protein localises to the secreted. Its function is as follows. Toxin that seems to act by forming pores in the membrane of the cell. Has a hemolytic and a leucotoxic activity. This chain is Gamma-hemolysin component A (hlgA), found in Staphylococcus aureus (strain COL).